The sequence spans 143 residues: Transcriptional regulator MraZ (143 aa).

2 consecutive SpoVT-AbrB domains span residues 5 to 47 and 76 to 119; these read EFDH…TLEE and AVEV…DRET.

This sequence belongs to the MraZ family. As to quaternary structure, forms oligomers.

It localises to the cytoplasm. The protein resides in the nucleoid. This Staphylococcus epidermidis (strain ATCC 35984 / DSM 28319 / BCRC 17069 / CCUG 31568 / BM 3577 / RP62A) protein is Transcriptional regulator MraZ.